Reading from the N-terminus, the 324-residue chain is Protease HtpX homolog (324 aa).

2 helical membrane-spanning segments follow: residues 7–24 and 29–46; these read ALLL…GYLI and GALI…FTYW. His-130 lines the Zn(2+) pocket. The active site involves Glu-131. A Zn(2+)-binding site is contributed by His-134. Helical transmembrane passes span 145–165 and 172–192; these read ITAT…FFGG and GPGL…AMLV. Glu-201 is a binding site for Zn(2+). Polar residues predominate over residues 288-305; the sequence is PASTFSRGAGTAASSGTP. The segment at 288–324 is disordered; the sequence is PASTFSRGAGTAASSGTPRGTGRSPWGGQPRGRGPWG.

This sequence belongs to the peptidase M48B family. It depends on Zn(2+) as a cofactor.

The protein localises to the cell inner membrane. The sequence is that of Protease HtpX homolog from Rhodopseudomonas palustris (strain TIE-1).